The primary structure comprises 374 residues: Lipoyl synthase, mitochondrial (374 aa).

[4Fe-4S] cluster is bound by residues C101, C106, C112, C132, C136, C139, and S347. The 220-residue stretch at 117-336 folds into the Radical SAM core domain; it reads ENGTQTATIM…EERGNDLGFL (220 aa).

It belongs to the radical SAM superfamily. Lipoyl synthase family. [4Fe-4S] cluster is required as a cofactor.

The protein localises to the mitochondrion. The catalysed reaction is [[Fe-S] cluster scaffold protein carrying a second [4Fe-4S](2+) cluster] + N(6)-octanoyl-L-lysyl-[protein] + 2 oxidized [2Fe-2S]-[ferredoxin] + 2 S-adenosyl-L-methionine + 4 H(+) = [[Fe-S] cluster scaffold protein] + N(6)-[(R)-dihydrolipoyl]-L-lysyl-[protein] + 4 Fe(3+) + 2 hydrogen sulfide + 2 5'-deoxyadenosine + 2 L-methionine + 2 reduced [2Fe-2S]-[ferredoxin]. It participates in protein modification; protein lipoylation via endogenous pathway; protein N(6)-(lipoyl)lysine from octanoyl-[acyl-carrier-protein]: step 2/2. Functionally, catalyzes the radical-mediated insertion of two sulfur atoms into the C-6 and C-8 positions of the octanoyl moiety bound to the lipoyl domains of lipoate-dependent enzymes, thereby converting the octanoylated domains into lipoylated derivatives. The sequence is that of Lipoyl synthase, mitochondrial from Drosophila pseudoobscura pseudoobscura (Fruit fly).